Reading from the N-terminus, the 612-residue chain is MFRAQQNAYDDIVAKATDENLTSENWEYILDVCDKVSADESGAKDAVASMIKRLAHRNANVQLYTFELANALSQNCGPKAHRELASKSFTDALLRLANDRNTHPQVKSKILEHMEQWTEMFSSNPDFGIMEHAYMKLKSQNPNIQPPSKPTKRQITELDRQKEEEELQMALALSIKEKQSETSKQQDGSSQHVVTTSAQAEAAPSQGIPSGTTAATVSRVRALYDFQPSEPGELQFRKGDIIAVLESVYKDWWKGSLRGQVGIFPLNYVEKLSDPTQEELQREAQMEAEVFAEIKNVEKLLALLSTSSPELNVQENEEITKLYHSTLAIRPKLIELIGKYSKKKDDFTQLNEKFIKARRDYEALLEASMTHPAQSHYNRPAQPPFAYPPSGTHPGYPHHAPPQQEPQRYYTPRPSQDPQSAPHNTPGYYGAEPSTLPYPPDSQSPDFRKHTATGSMQLPQQQPSQPPQDAYSQGATTHYPPKTTYDHPQELGTSVYDSPQGNAPQAIQHSYHPAMQQELQQQQATGAEPTQRPYSPQENPPPQAPSSNPPYPVQTPQEPPQQSFAPPAPMHQPPPIPSVAPSQGAYGGGYQAYQPPTTQQHSPTSNPAAFYR.

One can recognise a VHS domain in the interval alanine 16–glutamine 145. The region spanning lysine 162–glutamate 181 is the UIM domain. A disordered region spans residues lysine 176 to threonine 212. Over residues threonine 182–glutamine 199 the composition is skewed to polar residues. The 60-residue stretch at alanine 215–aspartate 274 folds into the SH3 domain. A disordered region spans residues proline 372 to arginine 612. Composition is skewed to polar residues over residues arginine 413–histidine 423 and leucine 491–glutamine 508. Pro residues-rich tracts occupy residues glutamate 538–proline 559 and proline 566–serine 578. The segment covering threonine 597 to arginine 612 has biased composition (polar residues).

It belongs to the STAM family. In terms of assembly, component of the ESCRT-0 complex composed of HSE1 and VPS27.

It is found in the endosome membrane. Functionally, component of the ESCRT-0 complex which is the sorting receptor for ubiquitinated cargo proteins at the multivesicular body (MVB). The sequence is that of Class E vacuolar protein-sorting machinery protein HSE1 (HSE1) from Coccidioides immitis (strain RS) (Valley fever fungus).